We begin with the raw amino-acid sequence, 156 residues long: Ribosomal RNA large subunit methyltransferase H (156 aa).

S-adenosyl-L-methionine is bound by residues glycine 104 and 123-128; that span reads LSALTL.

Belongs to the RNA methyltransferase RlmH family. Homodimer.

The protein localises to the cytoplasm. It catalyses the reaction pseudouridine(1915) in 23S rRNA + S-adenosyl-L-methionine = N(3)-methylpseudouridine(1915) in 23S rRNA + S-adenosyl-L-homocysteine + H(+). In terms of biological role, specifically methylates the pseudouridine at position 1915 (m3Psi1915) in 23S rRNA. In Nitrosospira multiformis (strain ATCC 25196 / NCIMB 11849 / C 71), this protein is Ribosomal RNA large subunit methyltransferase H.